The primary structure comprises 357 residues: Alanine racemase (357 aa).

K34 (proton acceptor; specific for D-alanine) is an active-site residue. The residue at position 34 (K34) is an N6-(pyridoxal phosphate)lysine. R129 is a substrate binding site. Y254 acts as the Proton acceptor; specific for L-alanine in catalysis. M302 serves as a coordination point for substrate.

It belongs to the alanine racemase family. Requires pyridoxal 5'-phosphate as cofactor.

It catalyses the reaction L-alanine = D-alanine. It participates in amino-acid biosynthesis; D-alanine biosynthesis; D-alanine from L-alanine: step 1/1. Its function is as follows. Catalyzes the interconversion of L-alanine and D-alanine. Likely plays an important role in supplying D-alanine, which is an indispensable constituent in the biosynthesis of bacterial cell-wall peptidoglycan. This chain is Alanine racemase, found in Aeromonas hydrophila subsp. hydrophila (strain ATCC 7966 / DSM 30187 / BCRC 13018 / CCUG 14551 / JCM 1027 / KCTC 2358 / NCIMB 9240 / NCTC 8049).